A 1130-amino-acid chain; its full sequence is Serine/threonine-protein kinase LATS1 (1130 aa).

Residues 1-11 are compositionally biased toward basic and acidic residues; sequence MKRSEKPEGYR. Positions 1–71 are disordered; that stretch reads MKRSEKPEGY…PRQVRNPPKF (71 aa). The segment covering 19-30 has biased composition (polar residues); it reads PASNYTVSSRQM. Residues 46–64 show a composition bias toward basic and acidic residues; it reads DAAKAEHNMSKMSTEDPRQ. A UBA domain is found at 100-141; the sequence is EVNPQMLQDLQAAGFDEDMVIQALQKTNNRSIEAAIEFISKM. The segment at 149 to 276 is disordered; that stretch reads EQMAAAAARP…SWEPNSQTKR (128 aa). The segment covering 167–179 has biased composition (polar residues); that stretch reads NVQQSVNRKQSWK. Residues 235–268 are compositionally biased toward pro residues; that stretch reads NPPPPPQVRSVTPPPPPRGQTPPPRGTTPPPPSW. Thr-246 bears the Phosphothreonine mark. Ser-278 bears the Phosphoserine mark. Disordered stretches follow at residues 294–321, 365–405, 432–484, and 515–631; these read GAWQEGYPPPPLNTSPMNPPNQGQRGIS, AGTV…NGSI, NWPQ…PSAT, and THPS…ESRI. Pro residues predominate over residues 300–312; that stretch reads YPPPPLNTSPMNP. The PPxY motif 1 signature appears at 373-376; that stretch reads PPPY. The segment covering 381–405 has biased composition (polar residues); sequence ANGQSPSALQTGGSAAPSSYTNGSI. Residues 434–447 are compositionally biased toward low complexity; that stretch reads PQSSSAPAQSSPSS. The segment covering 454 to 482 has biased composition (polar residues); that stretch reads WQPNIPVRSNSFNNPLGNRASHSANSQPS. Phosphoserine; by NUAK1 and NUAK2 is present on Ser-464. Residues 526–655 form an interaction with YAP1 region; that stretch reads TVQPSPFPEG…HVENVLKSHQ (130 aa). Positions 556–559 match the PPxY motif 2 motif; that stretch reads PPPY. A compositionally biased stretch (basic and acidic residues) spans 579–609; it reads PSKEDQPSLPKEDESEKSYENVDSGDKEKKQ. Residue Ser-613 is modified to Phosphoserine. A compositionally biased stretch (basic and acidic residues) spans 621-630; that stretch reads KKDEERRESR. The residue at position 674 (Ser-674) is a Phosphoserine. In terms of domain architecture, Protein kinase spans 705–1010; that stretch reads FVKIKTLGIG…ADEIKAHPFF (306 aa). ATP contacts are provided by residues 711–719 and Lys-734; that span reads LGIGAFGEV. The active-site Proton acceptor is Asp-828. Ser-909 bears the Phosphoserine; by STK3/MST2 mark. Residues 1011–1090 enclose the AGC-kinase C-terminal domain; the sequence is KTIDFSSDLR…RRFFDDNGYP (80 aa). Phosphothreonine; by STK3/MST2 is present on Thr-1079. The disordered stretch occupies residues 1104-1130; that stretch reads SQGSEQQSDEDDQNTGSEIKNRDLVYV.

It belongs to the protein kinase superfamily. AGC Ser/Thr protein kinase family. As to quaternary structure, complexes with CDK1 in early mitosis. LATS1-associated CDK1 has no mitotic cyclin partner and no apparent kinase activity. Binds phosphorylated ZYX, locating this protein to the mitotic spindle and suggesting a role for actin regulatory proteins during mitosis. Binds to and colocalizes with LIMK1 at the actomyosin contractile ring during cytokinesis. Interacts (via PPxY motif 2) with YAP1 (via WW domains). Interacts with MOB1A and MOB1B. Interacts with LIMD1, WTIP and AJUBA. Interacts with ESR1, DCAF1 and DCAF13; probably recruits DCAF1 and DCAF13 to ESR1 to promote ESR1 ubiquitination and ubiquitin-mediated proteasomal degradation. Interacts with STK3/MST2; this interaction is inhibited in the presence of DLG5. Interacts with SCRIB in the presence of DLG5. Interacts with WWTR1/TAZ. Interacts with WWC1, WWC2 and WWC3 (via their WW domains). Mg(2+) is required as a cofactor. Autophosphorylated and phosphorylated during M-phase of the cell cycle. Phosphorylated by STK3/MST2 at Ser-909 and Thr-1079, which results in its activation. Phosphorylated by MAP4Ks; in parallel to STK3/MST2 and resulting to its activation. Phosphorylation at Ser-464 by NUAK1 and NUAK2 leads to decreased protein level and is required to regulate cellular senescence and cellular ploidy. Expressed in all adult tissues examined except for lung and kidney.

It localises to the cytoplasm. Its subcellular location is the cytoskeleton. It is found in the microtubule organizing center. The protein localises to the centrosome. The protein resides in the spindle. It localises to the midbody. Its subcellular location is the spindle pole body. The catalysed reaction is L-seryl-[protein] + ATP = O-phospho-L-seryl-[protein] + ADP + H(+). It catalyses the reaction L-threonyl-[protein] + ATP = O-phospho-L-threonyl-[protein] + ADP + H(+). Negative regulator of YAP1 in the Hippo signaling pathway that plays a pivotal role in organ size control and tumor suppression by restricting proliferation and promoting apoptosis. The core of this pathway is composed of a kinase cascade wherein STK3/MST2 and STK4/MST1, in complex with its regulatory protein SAV1, phosphorylates and activates LATS1/2 in complex with its regulatory protein MOB1, which in turn phosphorylates and inactivates YAP1 oncoprotein and WWTR1/TAZ. Phosphorylation of YAP1 by LATS1 inhibits its translocation into the nucleus to regulate cellular genes important for cell proliferation, cell death, and cell migration. Acts as a tumor suppressor which plays a critical role in maintenance of ploidy through its actions in both mitotic progression and the G1 tetraploidy checkpoint. Negatively regulates G2/M transition by down-regulating CDK1 kinase activity. Involved in the control of p53 expression. Affects cytokinesis by regulating actin polymerization through negative modulation of LIMK1. May also play a role in endocrine function. Plays a role in mammary gland epithelial cell differentiation, both through the Hippo signaling pathway and the intracellular estrogen receptor signaling pathway by promoting the degradation of ESR1. Acts as an activator of the NLRP3 inflammasome by mediating phosphorylation of 'Ser-265' of NLRP3 following NLRP3 palmitoylation, promoting NLRP3 activation by NEK7. This chain is Serine/threonine-protein kinase LATS1, found in Homo sapiens (Human).